The chain runs to 281 residues: Peptidyl-prolyl cis-trans isomerase CYP28, chloroplastic (281 aa).

Residues 1-24 constitute a chloroplast transit peptide; that stretch reads MASSSILIPPILTRRNLLLSTTIA. The region spanning 66 to 268 is the PPIase cyclophilin-type domain; sequence STTPCSDSTP…KTVFISGCGE (203 aa).

Belongs to the cyclophilin-type PPIase family. S-nytrosylated during the hypersensitive disease resistance response. Ubiquitous. Not detected in roots.

The protein localises to the plastid. The protein resides in the chloroplast. The catalysed reaction is [protein]-peptidylproline (omega=180) = [protein]-peptidylproline (omega=0). Functionally, PPIases accelerate the folding of proteins. It catalyzes the cis-trans isomerization of proline imidic peptide bonds in oligopeptides. The polypeptide is Peptidyl-prolyl cis-trans isomerase CYP28, chloroplastic (CYP28) (Arabidopsis thaliana (Mouse-ear cress)).